The chain runs to 466 residues: Phytase A (466 aa).

The first 19 residues, 1–19 (MGVFVVLLSIATLFGSTSG), serve as a signal peptide directing secretion. The N-linked (GlcNAc...) asparagine glycan is linked to Asn27. The cysteines at positions 31 and 40 are disulfide-linked. 1D-myo-inositol hexakisphosphate is bound by residues Tyr51, Arg81, His82, Arg85, and Thr88. Cystine bridges form between Cys71–Cys414, Cys215–Cys465, Cys264–Cys282, and Cys436–Cys444. The active-site Nucleophile is the His82. 2 N-linked (GlcNAc...) asparagine glycosylation sites follow: Asn105 and Asn120. Arg165 serves as a coordination point for 1D-myo-inositol hexakisphosphate. Residues Asn207 and Asn230 are each glycosylated (N-linked (GlcNAc...) asparagine). Lys301 contributes to the 1D-myo-inositol hexakisphosphate binding site. N-linked (GlcNAc...) asparagine glycosylation is found at Asn339 and Asn352. Residues His361 and Asp362 each coordinate 1D-myo-inositol hexakisphosphate. The N-linked (GlcNAc...) asparagine glycan is linked to Asn376.

This sequence belongs to the histidine acid phosphatase family. In terms of assembly, monomer.

Its subcellular location is the secreted. The enzyme catalyses 1D-myo-inositol hexakisphosphate + H2O = 1D-myo-inositol 1,2,4,5,6-pentakisphosphate + phosphate. It catalyses the reaction 1D-myo-inositol 1,2,4,5,6-pentakisphosphate + H2O = 1D-myo-inositol 1,2,5,6-tetrakisphosphate + phosphate. It carries out the reaction 1D-myo-inositol 1,2,5,6-tetrakisphosphate + H2O = 1D-myo-inositol 1,2,6-trisphosphate + phosphate. The catalysed reaction is 1D-myo-inositol 1,2,6-trisphosphate + H2O = 1D-myo-inositol 1,2-bisphosphate + phosphate. The enzyme catalyses 1D-myo-inositol 1,2-bisphosphate + H2O = 1D-myo-inositol 2-phosphate + phosphate. Functionally, catalyzes the phosphate monoester hydrolysis of phytic acid (myo-inositol hexakisphosphate), which results in the stepwise formation of myo-inositol pentakis-, tetrakis-, tris-, bis-, and monophosphates, as well as the liberation of inorganic phosphate. Myo-inositol 2-monophosphate is the end product. Has a broad substrate specificity and is also able to dephosphorylate other classic acid phosphatase substrates such as p-nitrophenyl phosphate, phenyl phosphate, fructose 1,6-bisphosphate, glucose 6-phosphate, 3-phosphoglycerate, as well as ADP and ATP. This chain is Phytase A, found in Aspergillus terreus.